The primary structure comprises 386 residues: Glucose-1-phosphate adenylyltransferase (386 aa).

Alpha-D-glucose 1-phosphate-binding positions include Y100, G165, 180 to 181 (EK), and S191.

The protein belongs to the bacterial/plant glucose-1-phosphate adenylyltransferase family. As to quaternary structure, homotetramer.

It catalyses the reaction alpha-D-glucose 1-phosphate + ATP + H(+) = ADP-alpha-D-glucose + diphosphate. It functions in the pathway glycan biosynthesis; glycogen biosynthesis. In terms of biological role, involved in the biosynthesis of ADP-glucose, a building block required for the elongation reactions to produce glycogen. Catalyzes the reaction between ATP and alpha-D-glucose 1-phosphate (G1P) to produce pyrophosphate and ADP-Glc. The sequence is that of Glucose-1-phosphate adenylyltransferase from Clostridium beijerinckii (strain ATCC 51743 / NCIMB 8052) (Clostridium acetobutylicum).